The sequence spans 217 residues: Adenylate kinase (217 aa).

Residue 10-15 (GAGKGT) participates in ATP binding. The interval 30 to 59 (STGDMFRAAIKEGTELGLQAKSFMDQGALV) is NMP. AMP is bound by residues Thr-31, Arg-36, 57–59 (ALV), 85–88 (GFPR), and Gln-92. The tract at residues 126-163 (GRRICKTCGASYHLIFNPPAEEGKCDKDGGELYTRADD) is LID. Arg-127 is a binding site for ATP. Zn(2+) contacts are provided by Cys-130 and Cys-133. Position 136 to 137 (136 to 137 (SY)) interacts with ATP. Zn(2+) contacts are provided by Cys-150 and Asp-153. Positions 160 and 171 each coordinate AMP. Residue Gln-199 coordinates ATP.

Belongs to the adenylate kinase family. As to quaternary structure, monomer.

It is found in the cytoplasm. It catalyses the reaction AMP + ATP = 2 ADP. The protein operates within purine metabolism; AMP biosynthesis via salvage pathway; AMP from ADP: step 1/1. Functionally, catalyzes the reversible transfer of the terminal phosphate group between ATP and AMP. Plays an important role in cellular energy homeostasis and in adenine nucleotide metabolism. This Lysinibacillus sphaericus (strain C3-41) protein is Adenylate kinase.